A 106-amino-acid chain; its full sequence is MVLATTEQIAGYEIIETLGIVLGNTVHSKHLGKDIAAAFKTLAGGEIRSYTELLTEARNIAIQRMIAEAEKLGADAIVGIKFGSSSVMQSAAEVLAYGTAVKIKKI.

Belongs to the UPF0145 family.

In Pseudothermotoga lettingae (strain ATCC BAA-301 / DSM 14385 / NBRC 107922 / TMO) (Thermotoga lettingae), this protein is UPF0145 protein Tlet_1264.